We begin with the raw amino-acid sequence, 133 residues long: Small ribosomal subunit protein uS8 (133 aa).

The protein belongs to the universal ribosomal protein uS8 family. As to quaternary structure, part of the 30S ribosomal subunit. Contacts proteins S5 and S12.

In terms of biological role, one of the primary rRNA binding proteins, it binds directly to 16S rRNA central domain where it helps coordinate assembly of the platform of the 30S subunit. The polypeptide is Small ribosomal subunit protein uS8 (Prochlorococcus marinus subsp. pastoris (strain CCMP1986 / NIES-2087 / MED4)).